Consider the following 276-residue polypeptide: Undecaprenyl-diphosphatase (276 aa).

The next 5 membrane-spanning stretches (helical) occupy residues 84–104 (YRLG…GLFF), 115–135 (LWVV…AEYV), 188–208 (FGFL…LPDA), 222–242 (QLLV…AWLL), and 250–270 (MYWF…LLAT).

The protein belongs to the UppP family.

The protein resides in the cell membrane. The enzyme catalyses di-trans,octa-cis-undecaprenyl diphosphate + H2O = di-trans,octa-cis-undecaprenyl phosphate + phosphate + H(+). Functionally, catalyzes the dephosphorylation of undecaprenyl diphosphate (UPP). Confers resistance to bacitracin. The sequence is that of Undecaprenyl-diphosphatase from Mycobacterium bovis (strain ATCC BAA-935 / AF2122/97).